A 287-amino-acid polypeptide reads, in one-letter code: Uroplakin-3a (287 aa).

Residues 1-18 (MLLLWALLALGCLRCGWT) form the signal peptide. Residues 19-207 (VNLQPQLASV…DTWPGRRSGG (189 aa)) are Lumenal-facing. N-linked (GlcNAc...) asparagine glycans are attached at residues Asn-74, Asn-139, and Asn-170. Residues 208 to 235 (MIVITSILGSLPFFLLVGFAGAIILSFV) form a helical membrane-spanning segment. Residues 236-287 (DMGSSDGEMTHDSQITQEAVPKTLGTSEPSYSSVNRGPPLDRAEVFSSKLQD) are Cytoplasmic-facing. Residues 243-287 (EMTHDSQITQEAVPKTLGTSEPSYSSVNRGPPLDRAEVFSSKLQD) are disordered. The segment covering 259 to 270 (LGTSEPSYSSVN) has biased composition (polar residues).

It belongs to the uroplakin-3 family. In terms of assembly, heterodimer with uroplakin-1B (UPK1B).

It is found in the endoplasmic reticulum membrane. In terms of biological role, component of the asymmetric unit membrane (AUM); a highly specialized biomembrane elaborated by terminally differentiated urothelial cells. May play an important role in AUM-cytoskeleton interaction in terminally differentiated urothelial cells. It also contributes to the formation of urothelial glycocalyx which may play an important role in preventing bacterial adherence. The protein is Uroplakin-3a (Upk3a) of Mus musculus (Mouse).